Here is a 159-residue protein sequence, read N- to C-terminus: NAD(P)H-quinone oxidoreductase subunit J, chloroplastic (159 aa).

Belongs to the complex I 30 kDa subunit family. As to quaternary structure, NDH is composed of at least 16 different subunits, 5 of which are encoded in the nucleus.

The protein resides in the plastid. It is found in the chloroplast thylakoid membrane. It catalyses the reaction a plastoquinone + NADH + (n+1) H(+)(in) = a plastoquinol + NAD(+) + n H(+)(out). The catalysed reaction is a plastoquinone + NADPH + (n+1) H(+)(in) = a plastoquinol + NADP(+) + n H(+)(out). Functionally, NDH shuttles electrons from NAD(P)H:plastoquinone, via FMN and iron-sulfur (Fe-S) centers, to quinones in the photosynthetic chain and possibly in a chloroplast respiratory chain. The immediate electron acceptor for the enzyme in this species is believed to be plastoquinone. Couples the redox reaction to proton translocation, and thus conserves the redox energy in a proton gradient. The sequence is that of NAD(P)H-quinone oxidoreductase subunit J, chloroplastic from Populus trichocarpa (Western balsam poplar).